A 240-amino-acid polypeptide reads, in one-letter code: Orotidine 5'-phosphate decarboxylase (240 aa).

Substrate-binding positions include D10, K32, 59–68, T122, R183, Q192, G212, and R213; that span reads DLKLHDIPNT. The Proton donor role is filled by K61.

Belongs to the OMP decarboxylase family. Type 1 subfamily. Homodimer.

The enzyme catalyses orotidine 5'-phosphate + H(+) = UMP + CO2. It participates in pyrimidine metabolism; UMP biosynthesis via de novo pathway; UMP from orotate: step 2/2. In terms of biological role, catalyzes the decarboxylation of orotidine 5'-monophosphate (OMP) to uridine 5'-monophosphate (UMP). The chain is Orotidine 5'-phosphate decarboxylase from Carboxydothermus hydrogenoformans (strain ATCC BAA-161 / DSM 6008 / Z-2901).